A 117-amino-acid polypeptide reads, in one-letter code: DNA-directed RNA polymerase II subunit RPB11 (117 aa).

Met-1 is modified (N-acetylmethionine).

The protein belongs to the archaeal Rpo11/eukaryotic RPB11/RPC19 RNA polymerase subunit family. In terms of assembly, component of the RNA polymerase II (Pol II) core complex consisting of 12 subunits: a ten-subunit catalytic core composed of POLR2A/RPB1, POLR2B/RPB2, POLR2C/RPB3, POLR2I/RPB9, POLR2J/RPB11, POLR2E/RPABC1, POLR2F/RPABC2, POLR2H/RPABC3, POLR2K/RPABC4 and POLR2L/RPABC5 and a mobile stalk composed of two subunits POLR2D/RPB4 and POLR2G/RPB7, protruding from the core and functioning primarily in transcription initiation. Part of Pol II(G) complex, in which Pol II core associates with an additional subunit POLR2M; unlike conventional Pol II, Pol II(G) functions as a transcriptional repressor. Part of TBP-based Pol II pre-initiation complex (PIC), in which Pol II core assembles with general transcription factors and other specific initiation factors including GTF2E1, GTF2E2, GTF2F1, GTF2F2, TCEA1, ERCC2, ERCC3, GTF2H2, GTF2H3, GTF2H4, GTF2H5, GTF2A1, GTF2A2, GTF2B and TBP; this large multi-subunit PIC complex mediates DNA unwinding and targets Pol II core to the transcription start site where the first phosphodiester bond forms. Interacts with AATF. Interacts with PTPN6; this interaction promotes the recruitment of RNA pol II to the PCK1 promoter.

It is found in the nucleus. In terms of biological role, core component of RNA polymerase II (Pol II), a DNA-dependent RNA polymerase which synthesizes mRNA precursors and many functional non-coding RNAs using the four ribonucleoside triphosphates as substrates. The sequence is that of DNA-directed RNA polymerase II subunit RPB11 (Polr2j) from Mus musculus (Mouse).